The chain runs to 106 residues: Acidic phospholipase A2 PhTX-III (106 aa).

3 residues coordinate Ca(2+): Tyr23, Gly25, and Gly27. Cystine bridges form between Cys24–Cys40, Cys39–Cys75, Cys45–Cys106, Cys46–Cys68, and Cys55–Cys66. Residue His43 is part of the active site. A Ca(2+)-binding site is contributed by Asp44. The active site involves Asp69.

Ca(2+) serves as cofactor. As to expression, expressed by the venom gland.

It is found in the secreted. The catalysed reaction is a 1,2-diacyl-sn-glycero-3-phosphocholine + H2O = a 1-acyl-sn-glycero-3-phosphocholine + a fatty acid + H(+). Partially inhibited by magnesium ions and completely inhibited by zinc ions These divalent cations may act as competitive antagonists of the cofactor. Functionally, snake venom phospholipase A2 (PLA2) that induces inflammatory response, with local edema and release of cytokines IL-1 alpha, IL-6 and TNF-alpha. Does not exhibit myotoxic, anticoagulant and antibacterial effects. Release of pro-inflammatory cytokines may be due to mast cell degranulation, and edema may be induced by arachidonic acid that results from the PLA2 catalytic activity. PLA2 catalyzes the calcium-dependent hydrolysis of the 2-acyl groups in 3-sn-phosphoglycerides. The polypeptide is Acidic phospholipase A2 PhTX-III (Bothrocophias hyoprora (Amazonian hognose viper)).